A 1101-amino-acid chain; its full sequence is Carbamoyl phosphate synthase large chain (1101 aa).

Positions 1 to 402 (MPKRTDLKSV…ALQKALRSLE (402 aa)) are carboxyphosphate synthetic domain. Arginine 129, arginine 169, glycine 175, glycine 176, glutamate 208, isoleucine 210, glutamate 215, glycine 241, valine 242, histidine 243, glutamine 285, and glutamate 299 together coordinate ATP. Residues 133–328 (KGVVERAGGE…IAKIATKLAL (196 aa)) enclose the ATP-grasp 1 domain. 3 residues coordinate Mg(2+): glutamine 285, glutamate 299, and asparagine 301. Mn(2+)-binding residues include glutamine 285, glutamate 299, and asparagine 301. The oligomerization domain stretch occupies residues 403–544 (QKGSELAFPQ…YRYSSYDLET (142 aa)). The carbamoyl phosphate synthetic domain stretch occupies residues 545–947 (EVAPHEGESV…AFAKSQSAAG (403 aa)). Residues 675-866 (ALVLERAGLV…LAKAAARIGV (192 aa)) enclose the ATP-grasp 2 domain. ATP is bound by residues arginine 711, arginine 750, leucine 752, glutamate 757, glycine 782, isoleucine 783, histidine 784, serine 785, glutamine 825, and glutamate 837. 3 residues coordinate Mg(2+): glutamine 825, glutamate 837, and asparagine 839. Glutamine 825, glutamate 837, and asparagine 839 together coordinate Mn(2+). Positions 948–1093 (GPLPTSGRVF…QEHDARLQQA (146 aa)) constitute an MGS-like domain. The interval 948-1101 (GPLPTSGRVF…QAVAGPEAAA (154 aa)) is allosteric domain.

It belongs to the CarB family. In terms of assembly, composed of two chains; the small (or glutamine) chain promotes the hydrolysis of glutamine to ammonia, which is used by the large (or ammonia) chain to synthesize carbamoyl phosphate. Tetramer of heterodimers (alpha,beta)4. Mg(2+) is required as a cofactor. The cofactor is Mn(2+).

It carries out the reaction hydrogencarbonate + L-glutamine + 2 ATP + H2O = carbamoyl phosphate + L-glutamate + 2 ADP + phosphate + 2 H(+). It catalyses the reaction hydrogencarbonate + NH4(+) + 2 ATP = carbamoyl phosphate + 2 ADP + phosphate + 2 H(+). It participates in amino-acid biosynthesis; L-arginine biosynthesis; carbamoyl phosphate from bicarbonate: step 1/1. The protein operates within pyrimidine metabolism; UMP biosynthesis via de novo pathway; (S)-dihydroorotate from bicarbonate: step 1/3. In terms of biological role, large subunit of the glutamine-dependent carbamoyl phosphate synthetase (CPSase). CPSase catalyzes the formation of carbamoyl phosphate from the ammonia moiety of glutamine, carbonate, and phosphate donated by ATP, constituting the first step of 2 biosynthetic pathways, one leading to arginine and/or urea and the other to pyrimidine nucleotides. The large subunit (synthetase) binds the substrates ammonia (free or transferred from glutamine from the small subunit), hydrogencarbonate and ATP and carries out an ATP-coupled ligase reaction, activating hydrogencarbonate by forming carboxy phosphate which reacts with ammonia to form carbamoyl phosphate. The chain is Carbamoyl phosphate synthase large chain from Micrococcus luteus (strain ATCC 4698 / DSM 20030 / JCM 1464 / CCM 169 / CCUG 5858 / IAM 1056 / NBRC 3333 / NCIMB 9278 / NCTC 2665 / VKM Ac-2230) (Micrococcus lysodeikticus).